The following is a 231-amino-acid chain: Aminodeoxyfutalosine nucleosidase (231 aa).

The active-site Proton acceptor is the Glu14. Residues Gly81, Val155, and Met175 to Glu176 each bind substrate. Residue Asp199 is the Proton donor of the active site.

Belongs to the PNP/UDP phosphorylase family. In terms of assembly, homodimer.

The catalysed reaction is 6-amino-6-deoxyfutalosine + H2O = dehypoxanthine futalosine + adenine. The enzyme catalyses S-adenosyl-L-homocysteine + H2O = S-(5-deoxy-D-ribos-5-yl)-L-homocysteine + adenine. It carries out the reaction S-methyl-5'-thioadenosine + H2O = 5-(methylsulfanyl)-D-ribose + adenine. It catalyses the reaction 5'-deoxyadenosine + H2O = 5-deoxy-D-ribose + adenine. Its pathway is quinol/quinone metabolism; menaquinone biosynthesis. It functions in the pathway amino-acid biosynthesis; L-methionine biosynthesis via salvage pathway; S-methyl-5-thio-alpha-D-ribose 1-phosphate from S-methyl-5'-thioadenosine (hydrolase route): step 1/2. Catalyzes the direct conversion of aminodeoxyfutalosine (AFL) into dehypoxanthine futalosine (DHFL) and adenine via the hydrolysis of the N-glycosidic bond; this reaction seems to represent an essential step in the menaquinone biosynthesis pathway in Helicobacter species. Can also probably catalyzes the hydrolysis of 5'-methylthioadenosine (MTA) and S-adenosylhomocysteine (SAH) to adenine and the corresponding thioribose, 5'-methylthioribose and S-ribosylhomocysteine, respectively. These other activities highlight the tremendous versatility of the enzyme, which also plays key roles in S-adenosylmethionine recycling and in the biosynthesis of the quorum-sensing molecule autoinducer-2. Does not act on futalosine (FL) as substrate. This is Aminodeoxyfutalosine nucleosidase (mtnN) from Helicobacter pylori (strain ATCC 700392 / 26695) (Campylobacter pylori).